Here is a 614-residue protein sequence, read N- to C-terminus: Interleukin-18 receptor accessory protein (614 aa).

The N-terminal stretch at 1–19 (MLCLGWVFLWFVAGEKTTG) is a signal peptide. The Extracellular segment spans residues 20–356 (FNHSACATKK…RTIRLRKKEE (337 aa)). An N-linked (GlcNAc...) asparagine glycan is attached at asparagine 21. Cysteine 46 and cysteine 126 are joined by a disulfide. The segment at 59-78 (ASQLSPTQSPAHKPCSGSQK) is disordered. Ig-like C2-type domains follow at residues 148–234 (PQRN…WTVR) and 250–352 (PEIL…IRLR). Asparagine 151 carries N-linked (GlcNAc...) asparagine glycosylation. Cystine bridges form between cysteine 154–cysteine 179, cysteine 174–cysteine 220, and cysteine 179–cysteine 220. Asparagine 227 carries N-linked (GlcNAc...) asparagine glycosylation. A disulfide bridge links cysteine 272 with cysteine 336. The N-linked (GlcNAc...) asparagine glycan is linked to asparagine 344. Residues 357 to 377 (VVFVYILLGTALMLVGVLVAA) form a helical membrane-spanning segment. Residues 378–614 (AFLYWYWIEV…LLLYSDQKRC (237 aa)) lie on the Cytoplasmic side of the membrane. Positions 405 to 558 (KEFDAFVSYS…RFWTQIRYHM (154 aa)) constitute a TIR domain. Glutamate 492 is an active-site residue.

This sequence belongs to the interleukin-1 receptor family. Forms a ternary complex with IL18 and IL18R1. Within this complex, IL18R1 is involved in ligand-binding and IL18RAP in signaling leading to NF-kappa-B and JNK activation.

The protein localises to the cell membrane. It carries out the reaction NAD(+) + H2O = ADP-D-ribose + nicotinamide + H(+). Within the IL18 receptor complex, does not mediate IL18-binding, but involved in IL18-dependent signal transduction, leading to NF-kappa-B and JNK activation. May play a role in IL18-mediated IFNG synthesis from T-helper 1 (Th1) cells. This is Interleukin-18 receptor accessory protein from Mus musculus (Mouse).